The sequence spans 208 residues: Putative ADP-ribose pyrophosphatase YjhB (208 aa).

In terms of domain architecture, Nudix hydrolase spans 69-195 (TPKADVRGAV…NTPSQLSMLF (127 aa)). The Nudix box motif lies at 100–121 (GFCEIGLSPAENVVKEIKEESG). Residues glutamate 115 and glutamate 119 each coordinate Mg(2+).

It belongs to the Nudix hydrolase family. Mg(2+) is required as a cofactor. It depends on Mn(2+) as a cofactor.

In terms of biological role, probably mediates the hydrolysis of some nucleoside diphosphate derivatives. This Bacillus subtilis (strain 168) protein is Putative ADP-ribose pyrophosphatase YjhB (yjhB).